A 159-amino-acid polypeptide reads, in one-letter code: 3-hydroxyacyl-[acyl-carrier-protein] dehydratase FabZ (159 aa).

The active site involves His62.

This sequence belongs to the thioester dehydratase family. FabZ subfamily.

The protein localises to the cytoplasm. It catalyses the reaction a (3R)-hydroxyacyl-[ACP] = a (2E)-enoyl-[ACP] + H2O. In terms of biological role, involved in unsaturated fatty acids biosynthesis. Catalyzes the dehydration of short chain beta-hydroxyacyl-ACPs and long chain saturated and unsaturated beta-hydroxyacyl-ACPs. In Methylobacterium nodulans (strain LMG 21967 / CNCM I-2342 / ORS 2060), this protein is 3-hydroxyacyl-[acyl-carrier-protein] dehydratase FabZ.